The following is a 204-amino-acid chain: Quinol oxidase subunit 3 (204 aa).

5 helical membrane-spanning segments follow: residues 27-47, 66-86, 95-115, 140-160, and 184-204; these read FWIFLGAEIVLFSTLFATFFV, LVMIMTFLLLISSFTCGIAVH, GVVIWTIITLLLGAGFVGCEI, LLGTHGTHVTIGIFWIIGILI, and FLDVVWIFIFTGVYLMGLGGL.

It belongs to the cytochrome c oxidase subunit 3 family.

Its subcellular location is the cell membrane. It catalyses the reaction 2 a quinol + O2 = 2 a quinone + 2 H2O. Functionally, catalyzes quinol oxidation with the concomitant reduction of oxygen to water. Major component for energy conversion during vegetative growth. In Bacillus spizizenii (strain ATCC 23059 / NRRL B-14472 / W23) (Bacillus subtilis subsp. spizizenii), this protein is Quinol oxidase subunit 3 (qoxC).